Reading from the N-terminus, the 1361-residue chain is Xanthine dehydrogenase 1 (1361 aa).

Positions 15-101 (TEALLYVNGV…GMHVISIEGL (87 aa)) constitute a 2Fe-2S ferredoxin-type domain. [2Fe-2S] cluster-binding residues include cysteine 53, cysteine 58, cysteine 61, cysteine 83, cysteine 123, cysteine 126, cysteine 159, and cysteine 161. Residues 257–442 (RGNGGITWYR…LSVFLPWTRP (186 aa)) form the FAD-binding PCMH-type domain. FAD contacts are provided by residues 285 to 292 (LLVGNTEV), phenylalanine 365, 375 to 379 (CIGGN), aspartate 388, leucine 432, and lysine 450. The Mo-molybdopterin site is built by glutamine 796 and phenylalanine 827. Substrate is bound by residues glutamate 831 and arginine 909. Arginine 941 is a Mo-molybdopterin binding site. Substrate-binding residues include phenylalanine 943 and threonine 1039. Alanine 1108 lines the Mo-molybdopterin pocket. Glutamate 1297 (proton acceptor) is an active-site residue.

It belongs to the xanthine dehydrogenase family. In terms of assembly, homodimer. It depends on [2Fe-2S] cluster as a cofactor. The cofactor is FAD. Mo-molybdopterin serves as cofactor. Expressed in roots, leaves, stems, flowers and siliques.

It catalyses the reaction xanthine + NAD(+) + H2O = urate + NADH + H(+). The catalysed reaction is hypoxanthine + NAD(+) + H2O = xanthine + NADH + H(+). Its function is as follows. Key enzyme involved in purine catabolism. Catalyzes the oxidation of hypoxanthine to xanthine and the oxidation of xanthine to urate. Regulates the level of ureides and plays an important role during plant growth and development, senescence and response to stresses. Possesses NADH oxidase activity and may contribute to the generation of superoxide anions in planta. The sequence is that of Xanthine dehydrogenase 1 (XDH1) from Arabidopsis thaliana (Mouse-ear cress).